Here is a 247-residue protein sequence, read N- to C-terminus: Segregation and condensation protein A (247 aa).

This sequence belongs to the ScpA family. In terms of assembly, component of a cohesin-like complex composed of ScpA, ScpB and the Smc homodimer, in which ScpA and ScpB bind to the head domain of Smc. The presence of the three proteins is required for the association of the complex with DNA.

It is found in the cytoplasm. In terms of biological role, participates in chromosomal partition during cell division. May act via the formation of a condensin-like complex containing Smc and ScpB that pull DNA away from mid-cell into both cell halves. The chain is Segregation and condensation protein A from Bacillus cereus (strain AH187).